Reading from the N-terminus, the 129-residue chain is Small ribosomal subunit protein uS11 (129 aa).

This sequence belongs to the universal ribosomal protein uS11 family. Part of the 30S ribosomal subunit. Interacts with proteins S7 and S18. Binds to IF-3.

Functionally, located on the platform of the 30S subunit, it bridges several disparate RNA helices of the 16S rRNA. Forms part of the Shine-Dalgarno cleft in the 70S ribosome. The sequence is that of Small ribosomal subunit protein uS11 from Hyphomonas neptunium (strain ATCC 15444).